Reading from the N-terminus, the 189-residue chain is RPW8-like protein 1 (189 aa).

An RPW8 domain is found at 1–153 (MPLVELLTSA…ITRQPMDIIE (153 aa)). The chain crosses the membrane as a helical span at residues 7-24 (LTSAALGLSLQLLHDAII). Coiled-coil stretches lie at residues 65–92 (FRKV…LKLR) and 126–147 (DIKK…ITRQ). The N-linked (GlcNAc...) asparagine glycan is linked to asparagine 177.

The protein belongs to the plant RPW8 protein family.

The protein resides in the membrane. Probable disease resistance (R) protein. The protein is RPW8-like protein 1 of Arabidopsis thaliana (Mouse-ear cress).